A 296-amino-acid polypeptide reads, in one-letter code: Cytidine deaminase (296 aa).

CMP/dCMP-type deaminase domains are found at residues 47-167 (TEAE…FGPK) and 186-296 (DSSD…VDPV). A substrate-binding site is contributed by 88–90 (NLE). His101 is a binding site for Zn(2+). Glu103 functions as the Proton donor in the catalytic mechanism. Zn(2+) contacts are provided by Cys128 and Cys131.

Belongs to the cytidine and deoxycytidylate deaminase family. In terms of assembly, homodimer. The cofactor is Zn(2+).

It carries out the reaction cytidine + H2O + H(+) = uridine + NH4(+). The enzyme catalyses 2'-deoxycytidine + H2O + H(+) = 2'-deoxyuridine + NH4(+). In terms of biological role, this enzyme scavenges exogenous and endogenous cytidine and 2'-deoxycytidine for UMP synthesis. The polypeptide is Cytidine deaminase (Shewanella sp. (strain ANA-3)).